The primary structure comprises 432 residues: Methylenetetrahydrofolate--tRNA-(uracil-5-)-methyltransferase TrmFO (432 aa).

7-12 contributes to the FAD binding site; that stretch reads GGGLAG.

Belongs to the MnmG family. TrmFO subfamily. It depends on FAD as a cofactor.

The protein resides in the cytoplasm. It catalyses the reaction uridine(54) in tRNA + (6R)-5,10-methylene-5,6,7,8-tetrahydrofolate + NADH + H(+) = 5-methyluridine(54) in tRNA + (6S)-5,6,7,8-tetrahydrofolate + NAD(+). The enzyme catalyses uridine(54) in tRNA + (6R)-5,10-methylene-5,6,7,8-tetrahydrofolate + NADPH + H(+) = 5-methyluridine(54) in tRNA + (6S)-5,6,7,8-tetrahydrofolate + NADP(+). Its function is as follows. Catalyzes the folate-dependent formation of 5-methyl-uridine at position 54 (M-5-U54) in all tRNAs. The polypeptide is Methylenetetrahydrofolate--tRNA-(uracil-5-)-methyltransferase TrmFO (Coprothermobacter proteolyticus (strain ATCC 35245 / DSM 5265 / OCM 4 / BT)).